We begin with the raw amino-acid sequence, 436 residues long: Suppressor of cytokine signaling 4 (436 aa).

The segment at 1–25 (MAENNSKNVDVRPKTSRSRSADRKD) is disordered. Basic and acidic residues predominate over residues 9–25 (VDVRPKTSRSRSADRKD). Residues 283-378 (CYWGVMDKYA…FFEPLLSTPL (96 aa)) enclose the SH2 domain. In terms of domain architecture, SOCS box spans 373 to 422 (LLSTPLIRTFPFSLQHICRTVICNCTTYDGIDALPIPSPMKLYLKEYHYK).

It functions in the pathway protein modification; protein ubiquitination. In terms of biological role, SOCS family proteins form part of a classical negative feedback system that regulates cytokine signal transduction. Substrate-recognition component of a SCF-like ECS (Elongin BC-CUL2/5-SOCS-box protein) E3 ubiquitin-protein ligase complex which mediates the ubiquitination and subsequent proteasomal degradation of target proteins. Inhibits EGF signaling by mediating the degradation of the Tyr-phosphorylated EGF receptor/EGFR. This is Suppressor of cytokine signaling 4 (Socs4) from Mus musculus (Mouse).